Here is a 2957-residue protein sequence, read N- to C-terminus: Toxin PAU_02230 (2957 aa).

The disordered stretch occupies residues 949 to 968 (TSVSPAETAQSTPEPLSDFA). Residues 2115–2144 (EWFKHSETGLKGGGPIDDIRKYIARKSAIK) form a membrane localization domain that interacts with the inner leaflet of the plasma membrane region. Residues 2115 to 2449 (EWFKHSETGL…TSTIVTPLAP (335 aa)) form a tyrosine glycosyltransferase PaToxG region. UDP-N-acetyl-alpha-D-glucosamine-binding positions include 2169–2171 (IWI) and 2259–2260 (SD). Positions 2276 and 2278 each coordinate a divalent metal cation. The DxDD motif signature appears at 2276–2279 (DIDD). Asn-2312 serves as a coordination point for UDP-N-acetyl-alpha-D-glucosamine. Positions 2450–2672 (KTEMLPPVPS…NYSVNPTAEN (223 aa)) are sseI-like deamidase PaToxD. Catalysis depends on for deamidase activity residues Cys-2509, His-2547, and Asp-2562. Residues 2667 to 2705 (NPTAENLSPPPPPPIPSHGQVPKTVTPPPPPMRSPLSLS) are disordered.

The cofactor is a divalent metal cation.

It localises to the secreted. Its subcellular location is the host cell membrane. It catalyses the reaction L-tyrosyl-[protein] + UDP-N-acetyl-alpha-D-glucosamine = O-(N-acetyl-alpha-D-glucosaminyl)-L-tyrosyl-[protein] + UDP + H(+). The catalysed reaction is L-glutaminyl-[protein] + H2O = L-glutamyl-[protein] + NH4(+). Its function is as follows. Toxin that acts on host cells by modifying Rho proteins by tyrosine GlcNAcylation and heterotrimeric G alpha proteins by deamidation. Catalyzes the mono-O-GlcNAcylation of small GTPases of the Rho family (RhoA, RhoB, RhoC, Rac1, Rac2, Rac3, Cdc42) in eukaryotic host cells at the conserved tyrosine residue located in the switch I region (Tyr-32/34), using UDP-N-acetylglucosamine (UDP-GlcNAc) as the sugar donor; other GTPases of the Rho, Ras or Rab families are not substrates. Tyrosine glycosylation inhibits Rho activation and prevents interaction with downstream effectors, resulting in actin disassembly, inhibition of phagocytosis, cell rounding, and toxicity toward insects and mammalian cells. Also catalyzes the deamidation of the catalytic glutamine in heterotrimeric G alpha proteins (Gi, Gq/11), which blocks GTP hydrolysis and arrests the G proteins in a permanent active state leading to activation of Rho GTPases. Thus, PaTox hijacks host GTPase signaling in a bidirectional manner by deamidation-induced activation and glycosylation-induced inactivation of GTPases. In Photorhabdus asymbiotica subsp. asymbiotica (strain ATCC 43949 / 3105-77) (Xenorhabdus luminescens (strain 2)), this protein is Toxin PAU_02230.